Consider the following 187-residue polypeptide: UPF0340 protein SPP_0683 (187 aa).

It belongs to the UPF0340 family.

In Streptococcus pneumoniae (strain P1031), this protein is UPF0340 protein SPP_0683.